The following is a 631-amino-acid chain: Replication protein E1 (631 aa).

The interval 28–48 (TGDIISEDETEEDEGTASDLD) is disordered. Over residues 32–43 (ISEDETEEDEGT) the composition is skewed to acidic residues. Positions 86 to 88 (KRK) match the Nuclear localization signal motif. Serine 92 carries the phosphoserine; by host modification. Residues 168–334 (IGATPPQQIQ…QTQIQHSFQD (167 aa)) are DNA-binding region. Residues 433–583 (VDFISFLSYF…FPIDTNGNPV (151 aa)) enclose the SF3 helicase domain. Position 459–466 (459–466 (GPPNTGKS)) interacts with ATP. A Glycyl lysine isopeptide (Lys-Gly) (interchain with G-Cter in SUMO) cross-link involves residue lysine 540.

This sequence belongs to the papillomaviridae E1 protein family. Can form hexamers. Interacts with E2 protein; this interaction increases E1 DNA binding specificity. Interacts with host DNA polymerase subunit POLA2. Interacts with host single stranded DNA-binding protein RPA1. Interacts with host TOP1; this interaction stimulates the enzymatic activity of TOP1. Phosphorylated. Post-translationally, sumoylated.

It localises to the host nucleus. The catalysed reaction is Couples ATP hydrolysis with the unwinding of duplex DNA by translocating in the 3'-5' direction.. It catalyses the reaction ATP + H2O = ADP + phosphate + H(+). Its function is as follows. ATP-dependent DNA 3'-5' helicase required for initiation of viral DNA replication. It forms a complex with the viral E2 protein. The E1-E2 complex binds to the replication origin which contains binding sites for both proteins. During the initial step, a dimer of E1 interacts with a dimer of protein E2 leading to a complex that binds the viral origin of replication with high specificity. Then, a second dimer of E1 displaces the E2 dimer in an ATP-dependent manner to form the E1 tetramer. Following this, two E1 monomers are added to each half of the site, which results in the formation of two E1 trimers on the viral ori. Subsequently, two hexamers will be created. The double hexamer acts as a bi-directional helicase machinery and unwinds the viral DNA and then recruits the host DNA polymerase to start replication. The protein is Replication protein E1 of Homo sapiens (Human).